We begin with the raw amino-acid sequence, 329 residues long: GTP 3',8-cyclase (329 aa).

The region spanning 8 to 234 is the Radical SAM core domain; the sequence is AFARKYYYLR…QLRQRSDGPA (227 aa). Arginine 17 provides a ligand contact to GTP. Cysteine 24 and cysteine 28 together coordinate [4Fe-4S] cluster. Tyrosine 30 is an S-adenosyl-L-methionine binding site. Cysteine 31 is a [4Fe-4S] cluster binding site. Position 68 (arginine 68) interacts with GTP. An S-adenosyl-L-methionine-binding site is contributed by glycine 72. Residue threonine 99 coordinates GTP. Serine 123 provides a ligand contact to S-adenosyl-L-methionine. Lysine 160 provides a ligand contact to GTP. Methionine 194 contacts S-adenosyl-L-methionine. 2 residues coordinate [4Fe-4S] cluster: cysteine 257 and cysteine 260. Residue 262 to 264 participates in GTP binding; the sequence is RLR. Cysteine 274 is a binding site for [4Fe-4S] cluster.

The protein belongs to the radical SAM superfamily. MoaA family. Monomer and homodimer. [4Fe-4S] cluster serves as cofactor.

It carries out the reaction GTP + AH2 + S-adenosyl-L-methionine = (8S)-3',8-cyclo-7,8-dihydroguanosine 5'-triphosphate + 5'-deoxyadenosine + L-methionine + A + H(+). The protein operates within cofactor biosynthesis; molybdopterin biosynthesis. Catalyzes the cyclization of GTP to (8S)-3',8-cyclo-7,8-dihydroguanosine 5'-triphosphate. The polypeptide is GTP 3',8-cyclase (Escherichia coli O17:K52:H18 (strain UMN026 / ExPEC)).